A 444-amino-acid polypeptide reads, in one-letter code: Probable D-serine dehydratase (444 aa).

N6-(pyridoxal phosphate)lysine is present on Lys118.

Belongs to the serine/threonine dehydratase family. DsdA subfamily. The cofactor is pyridoxal 5'-phosphate.

It catalyses the reaction D-serine = pyruvate + NH4(+). In Acinetobacter baumannii (strain ATCC 17978 / DSM 105126 / CIP 53.77 / LMG 1025 / NCDC KC755 / 5377), this protein is Probable D-serine dehydratase.